The primary structure comprises 310 residues: Pseudouridine-5'-phosphate glycosidase (310 aa).

Glu26 serves as the catalytic Proton donor. Positions 87 and 107 each coordinate substrate. Asp139 serves as a coordination point for Mn(2+). 141 to 143 lines the substrate pocket; sequence SAD. Lys160 serves as the catalytic Nucleophile.

It belongs to the pseudouridine-5'-phosphate glycosidase family. Homotrimer. Mn(2+) serves as cofactor.

It catalyses the reaction D-ribose 5-phosphate + uracil = psi-UMP + H2O. In terms of biological role, catalyzes the reversible cleavage of pseudouridine 5'-phosphate (PsiMP) to ribose 5-phosphate and uracil. Functions biologically in the cleavage direction, as part of a pseudouridine degradation pathway. The polypeptide is Pseudouridine-5'-phosphate glycosidase (Roseobacter denitrificans (strain ATCC 33942 / OCh 114) (Erythrobacter sp. (strain OCh 114))).